The sequence spans 281 residues: Leukocyte antigen CD37 (281 aa).

The Cytoplasmic portion of the chain corresponds to 1-17 (MSAQESCLSLIKYFLFV). The helical transmembrane segment at 18 to 38 (FNLFFFVLGGLIFCFGTWILI) threads the bilayer. Residues 39 to 59 (DKTSFVSFVGLSFVPLQTWSK) are Extracellular-facing. Residues 60-74 (VLAVSGVLTMALALL) traverse the membrane as a helical segment. Residues 75–85 (GCVGALKELRC) lie on the Cytoplasmic side of the membrane. Residues 86–111 (LLGLYFGMLLLLFATQITLGILISTQ) form a helical membrane-spanning segment. At 112-241 (RVRLERRVQE…QSLQKWLHNN (130 aa)) the chain is on the extracellular side. N-linked (GlcNAc...) asparagine glycans are attached at residues Asn-170, Asn-183, and Asn-188. A helical membrane pass occupies residues 242-266 (IISIVGICLGVGLLELGFMTLSIFL). The Cytoplasmic segment spans residues 267-281 (CRNLDHVYDRLARYR).

Belongs to the tetraspanin (TM4SF) family. In terms of assembly, interacts with SCIMP. Interacts with SOCS3. Interacts with DECTIN1/CLEC7A. Post-translationally, tyrosine phosphorylated; leading to activation of downstream signaling pathways.

It is found in the cell membrane. Its function is as follows. Structural component of specialized membrane microdomains known as tetraspanin-enriched microdomains (TERMs), which act as platforms for receptor clustering and signaling. Participates thereby in diverse biological functions such as cell signal transduction, adhesion, migration and protein trafficking. Upon ligand binding, two signaling pathways are activated, one acting through phosphorylation by LYN leading to cell death or a survival pathway with activation of GSK3B. Plays an essential role for clustering of integrin ITGA4/ITGB1 and promotes its mobility in the plasma membrane of B-cells. In turn, participates in ITGA4/ITGB1 integrin-mediated antiapoptotic signaling through AKT. Also plays a role in the migration of dendritic cells and neutrophils to draining lymph nodes, as well as in their integrin-mediated adhesion. Negatively regulates IL-6 responses through direct interaction with SOCS3 thereby preventing constitutive IL-6 signaling. Alternatively, inhibition of IL-6 signaling can also occur via interaction and stabilization of DECTIN1/CLEC7A at the cell membrane to inhibit its ability to promote the production of IL-6. The chain is Leukocyte antigen CD37 (Cd37) from Mus musculus (Mouse).